Here is a 339-residue protein sequence, read N- to C-terminus: Phenylalanine--tRNA ligase alpha subunit (339 aa).

E254 serves as a coordination point for Mg(2+).

Belongs to the class-II aminoacyl-tRNA synthetase family. Phe-tRNA synthetase alpha subunit type 1 subfamily. As to quaternary structure, tetramer of two alpha and two beta subunits. It depends on Mg(2+) as a cofactor.

It is found in the cytoplasm. The catalysed reaction is tRNA(Phe) + L-phenylalanine + ATP = L-phenylalanyl-tRNA(Phe) + AMP + diphosphate + H(+). The polypeptide is Phenylalanine--tRNA ligase alpha subunit (Clostridium tetani (strain Massachusetts / E88)).